A 325-amino-acid polypeptide reads, in one-letter code: Phosphate acyltransferase (325 aa).

It belongs to the PlsX family. In terms of assembly, homodimer. Probably interacts with PlsY.

The protein localises to the cytoplasm. The enzyme catalyses a fatty acyl-[ACP] + phosphate = an acyl phosphate + holo-[ACP]. The protein operates within lipid metabolism; phospholipid metabolism. Functionally, catalyzes the reversible formation of acyl-phosphate (acyl-PO(4)) from acyl-[acyl-carrier-protein] (acyl-ACP). This enzyme utilizes acyl-ACP as fatty acyl donor, but not acyl-CoA. The sequence is that of Phosphate acyltransferase from Mycoplasmopsis pulmonis (strain UAB CTIP) (Mycoplasma pulmonis).